The primary structure comprises 372 residues: MAEKLHISVLCGGQSTEHEISIQSAKNIVNTLDAAKYLISVIFIDHVGRWYLIDQPEMFLAHSPDHLVKEGSARPITIAFGDAAKPWQSLNGDGRRYSADCVFPMVHGTQGEDGALQGLLELLNLPYVGANVQSSAVCMEKDLTKTVLRAGGIPVVDWHTLSPRDATEGVYQRLLDRWGTSELFVKAVSLGSSVATLPVKTETEFTKAVKEVFRYDDRLMVEPRIRGREIECAVLGNGAPKASLPGEIIPHHDYYSYDAKYLDPNGATTTTSVDLSESVTKQIQQIAIDAFKMVHCSGMARVDFFVTPNNKVLVNEINTIPGFTNISMYPKMWEASGLPCPNLLDQLIELAIDRHQEQQKLIRCYEVKARSL.

Positions 145–349 (KTVLRAGGIP…CPNLLDQLIE (205 aa)) constitute an ATP-grasp domain. 176–231 (DRWGTSELFVKAVSLGSSVATLPVKTETEFTKAVKEVFRYDDRLMVEPRIRGREIE) serves as a coordination point for ATP. Mg(2+) contacts are provided by Asp303, Glu316, and Asn318.

It belongs to the D-alanine--D-alanine ligase family. Mg(2+) is required as a cofactor. The cofactor is Mn(2+).

The protein localises to the cytoplasm. The catalysed reaction is 2 D-alanine + ATP = D-alanyl-D-alanine + ADP + phosphate + H(+). It participates in cell wall biogenesis; peptidoglycan biosynthesis. In terms of biological role, cell wall formation. This chain is D-alanine--D-alanine ligase, found in Coxiella burnetii (strain Dugway 5J108-111).